A 126-amino-acid chain; its full sequence is MSKDKNPRRVADNEAMAKLRMLKTSPQKLNLVAGLIRGQKVEKALTDLTFSKKRIAVDVKKCLQSAIANAENNHGLDVDELIVAEAWVGKNLVMKRGRPRARGRFGKILKPFSELTITVRQVEETS.

It belongs to the universal ribosomal protein uL22 family. In terms of assembly, part of the 50S ribosomal subunit.

Its function is as follows. This protein binds specifically to 23S rRNA; its binding is stimulated by other ribosomal proteins, e.g. L4, L17, and L20. It is important during the early stages of 50S assembly. It makes multiple contacts with different domains of the 23S rRNA in the assembled 50S subunit and ribosome. The globular domain of the protein is located near the polypeptide exit tunnel on the outside of the subunit, while an extended beta-hairpin is found that lines the wall of the exit tunnel in the center of the 70S ribosome. The protein is Large ribosomal subunit protein uL22 of Jannaschia sp. (strain CCS1).